A 382-amino-acid chain; its full sequence is MKITQLTTYRVPPRWMFLRIETDEGLIGWGEPVVEGHARAVQAAVHELEPYLIGQDPARINDLWQVMYRAGFYRGGAVFMSAIAGVDQALWDIKGKALGVPVYQLLGGLVRDRMRTYGWVGGDRPADVIDGIRQRVDAGFTHFKLNGCEELGIIDSSRAVDAAVARVAQIRAAFGNTVEFGLDFHGRVSVAMAAVLIKELEYLRPLFIEEPVLAEQAEHYPKLAAKTHLPLAAGERMYSRFEFKRVLAAGGIAILQPDLSHAGGISECLKIAAMAEAHDVAIAPHCPLGPIALASCLHVDYVSWNATLQEQGMGMHYNRGGEVLDYVLNPQDFRLDNGFIAPFTKPGLGVEINEALVLERSRDCPDWRNPVWRHADGSVAEW.

Asp-183 serves as a coordination point for Mg(2+). His-185 (proton donor) is an active-site residue. Mg(2+) is bound by residues Glu-209 and Glu-235. The active-site Proton acceptor is His-285.

Belongs to the mandelate racemase/muconate lactonizing enzyme family. GalD subfamily. The cofactor is Mg(2+).

The catalysed reaction is D-galactonate = 2-dehydro-3-deoxy-D-galactonate + H2O. It participates in carbohydrate acid metabolism; D-galactonate degradation; D-glyceraldehyde 3-phosphate and pyruvate from D-galactonate: step 1/3. Functionally, catalyzes the dehydration of D-galactonate to 2-keto-3-deoxy-D-galactonate. In Verminephrobacter eiseniae (strain EF01-2), this protein is D-galactonate dehydratase.